We begin with the raw amino-acid sequence, 622 residues long: Low affinity potassium transport system protein Kup (622 aa).

12 consecutive transmembrane segments (helical) span residues 9 to 29 (LPAI…TSPL), 49 to 69 (VFGF…IKYL), 103 to 123 (VIMG…TPAI), 137 to 157 (PQLD…LFMI), 165 to 185 (VGKL…VLGL), 213 to 233 (VSFI…ALYA), 247 to 267 (WFTV…ALLL), 276 to 296 (PFFL…AALA), 337 to 357 (IYIP…IVSF), 363 to 383 (LAAA…ILST), 396 to 416 (FVAL…SANL), and 419 to 439 (LLSG…IMTT).

The protein belongs to the HAK/KUP transporter (TC 2.A.72) family.

Its subcellular location is the cell inner membrane. It catalyses the reaction K(+)(in) + H(+)(in) = K(+)(out) + H(+)(out). Its function is as follows. Responsible for the low-affinity transport of potassium into the cell. Likely operates as a K(+):H(+) symporter. The chain is Low affinity potassium transport system protein Kup from Salmonella paratyphi B (strain ATCC BAA-1250 / SPB7).